Consider the following 268-residue polypeptide: Thiazole synthase (268 aa).

The active-site Schiff-base intermediate with DXP is K108. Residues G169, 195-196 (AG), and 217-218 (NS) each bind 1-deoxy-D-xylulose 5-phosphate. A disordered region spans residues 248-268 (RLKENPLASPSSPLDGVISNN). Over residues 255-268 (ASPSSPLDGVISNN) the composition is skewed to polar residues.

Belongs to the ThiG family. Homotetramer. Forms heterodimers with either ThiH or ThiS.

Its subcellular location is the cytoplasm. The catalysed reaction is [ThiS sulfur-carrier protein]-C-terminal-Gly-aminoethanethioate + 2-iminoacetate + 1-deoxy-D-xylulose 5-phosphate = [ThiS sulfur-carrier protein]-C-terminal Gly-Gly + 2-[(2R,5Z)-2-carboxy-4-methylthiazol-5(2H)-ylidene]ethyl phosphate + 2 H2O + H(+). Its pathway is cofactor biosynthesis; thiamine diphosphate biosynthesis. Its function is as follows. Catalyzes the rearrangement of 1-deoxy-D-xylulose 5-phosphate (DXP) to produce the thiazole phosphate moiety of thiamine. Sulfur is provided by the thiocarboxylate moiety of the carrier protein ThiS. In vitro, sulfur can be provided by H(2)S. The protein is Thiazole synthase of Prochlorococcus marinus (strain NATL2A).